Here is a 239-residue protein sequence, read N- to C-terminus: tRNA (guanine-N(7)-)-methyltransferase (239 aa).

Residues glutamate 69, glutamate 94, aspartate 121, and aspartate 144 each contribute to the S-adenosyl-L-methionine site. Residue aspartate 144 is part of the active site. Substrate is bound at residue lysine 148. The tract at residues 150–155 is interaction with RNA; the sequence is RHNKRR. Residues aspartate 180 and 217-220 contribute to the substrate site; that span reads TKFE.

It belongs to the class I-like SAM-binding methyltransferase superfamily. TrmB family. In terms of assembly, monomer.

The catalysed reaction is guanosine(46) in tRNA + S-adenosyl-L-methionine = N(7)-methylguanosine(46) in tRNA + S-adenosyl-L-homocysteine. It participates in tRNA modification; N(7)-methylguanine-tRNA biosynthesis. In terms of biological role, catalyzes the formation of N(7)-methylguanine at position 46 (m7G46) in tRNA. The polypeptide is tRNA (guanine-N(7)-)-methyltransferase (Sodalis glossinidius (strain morsitans)).